A 147-amino-acid polypeptide reads, in one-letter code: uncharacterized protein (147 aa).

Positions 1-147 (MEIRRADKDD…RPESGGSGSE (147 aa)) constitute an N-acetyltransferase domain.

It belongs to the acetyltransferase family.

This is an uncharacterized protein from Archaeoglobus fulgidus (strain ATCC 49558 / DSM 4304 / JCM 9628 / NBRC 100126 / VC-16).